The sequence spans 378 residues: Erythronate-4-phosphate dehydrogenase (378 aa).

Residues serine 45 and threonine 66 each contribute to the substrate site. Aspartate 146 is an NAD(+) binding site. Arginine 207 is a catalytic residue. Aspartate 231 provides a ligand contact to NAD(+). Glutamate 236 is a catalytic residue. The active-site Proton donor is the histidine 253. Glycine 256 is an NAD(+) binding site.

The protein belongs to the D-isomer specific 2-hydroxyacid dehydrogenase family. PdxB subfamily. In terms of assembly, homodimer.

It is found in the cytoplasm. The enzyme catalyses 4-phospho-D-erythronate + NAD(+) = (R)-3-hydroxy-2-oxo-4-phosphooxybutanoate + NADH + H(+). It functions in the pathway cofactor biosynthesis; pyridoxine 5'-phosphate biosynthesis; pyridoxine 5'-phosphate from D-erythrose 4-phosphate: step 2/5. Catalyzes the oxidation of erythronate-4-phosphate to 3-hydroxy-2-oxo-4-phosphonooxybutanoate. The protein is Erythronate-4-phosphate dehydrogenase of Wigglesworthia glossinidia brevipalpis.